A 391-amino-acid chain; its full sequence is GATA-binding factor 6-B (391 aa).

The span at 57 to 69 (GTHSVNSHWSQAT) shows a compositional bias: polar residues. Positions 57 to 107 (GTHSVNSHWSQATSESSSYSSSSPHPSSRYHYSPSPPMANGSTRDTGYSSS) are disordered. A compositionally biased stretch (low complexity) spans 70–89 (SESSSYSSSSPHPSSRYHYS). Residues 96–107 (NGSTRDTGYSSS) are compositionally biased toward polar residues. 2 GATA-type zinc fingers span residues 182-206 (CVNC…CNAC) and 236-260 (CANC…CNAC). The interval 277–334 (KEGIQTRKRKPKNLNKSKSSSSNGNSSHHITMTPTSTTSSTNSDDCIKNGSPSQNTAP) is disordered. A compositionally biased stretch (basic residues) spans 282-291 (TRKRKPKNLN). A compositionally biased stretch (low complexity) spans 292 to 319 (KSKSSSSNGNSSHHITMTPTSTTSSTNS).

As to expression, in embryos, expressed in the presumptive heart mesoderm. In adults, widely distributed but predominant in the heart.

It is found in the nucleus. In terms of biological role, transcriptional activator that binds 5'-GATA-3'-containing motifs within gene promoters. Regulates cardiac-specific transcription during embryogenesis and thereby cardiogenesis. The polypeptide is GATA-binding factor 6-B (gata6-b) (Xenopus laevis (African clawed frog)).